Here is a 525-residue protein sequence, read N- to C-terminus: Asparagine synthetase domain-containing protein YML096W (525 aa).

Catalysis depends on C2, which acts as the For GATase activity. Positions 2-209 (CGILLHYCPN…LNSNQRSHLP (208 aa)) constitute a Glutamine amidotransferase type-2 domain. The Asparagine synthetase domain maps to 210 to 523 (YEVTSEIDLN…GTDLLKENRN (314 aa)). Residues 503-525 (SAKMTKDGNKHGTDLLKENRNCS) are disordered. Over residues 506-525 (MTKDGNKHGTDLLKENRNCS) the composition is skewed to basic and acidic residues.

It is found in the cytoplasm. This Saccharomyces cerevisiae (strain ATCC 204508 / S288c) (Baker's yeast) protein is Asparagine synthetase domain-containing protein YML096W.